The sequence spans 201 residues: NADH-quinone oxidoreductase subunit I (201 aa).

4Fe-4S ferredoxin-type domains lie at 78 to 107 (MSYE…RIEA) and 116 to 147 (KVVR…MTDI). Cys87, Cys90, Cys93, Cys97, Cys127, Cys130, Cys133, and Cys137 together coordinate [4Fe-4S] cluster.

This sequence belongs to the complex I 23 kDa subunit family. In terms of assembly, NDH-1 is composed of 14 different subunits. Subunits NuoA, H, J, K, L, M, N constitute the membrane sector of the complex. It depends on [4Fe-4S] cluster as a cofactor.

It is found in the cell inner membrane. The catalysed reaction is a quinone + NADH + 5 H(+)(in) = a quinol + NAD(+) + 4 H(+)(out). Its function is as follows. NDH-1 shuttles electrons from NADH, via FMN and iron-sulfur (Fe-S) centers, to quinones in the respiratory chain. The immediate electron acceptor for the enzyme in this species is believed to be ubiquinone. Couples the redox reaction to proton translocation (for every two electrons transferred, four hydrogen ions are translocated across the cytoplasmic membrane), and thus conserves the redox energy in a proton gradient. The chain is NADH-quinone oxidoreductase subunit I from Aquifex aeolicus (strain VF5).